A 374-amino-acid polypeptide reads, in one-letter code: tRNA (guanine(26)-N(2))-dimethyltransferase (374 aa).

In terms of domain architecture, Trm1 methyltransferase spans 1 to 367; that stretch reads MILKEGEVVF…ATLKNVIEAI (367 aa). Residues R34, R66, D86, D113, and A114 each coordinate S-adenosyl-L-methionine.

It belongs to the class I-like SAM-binding methyltransferase superfamily. Trm1 family.

The enzyme catalyses guanosine(26) in tRNA + 2 S-adenosyl-L-methionine = N(2)-dimethylguanosine(26) in tRNA + 2 S-adenosyl-L-homocysteine + 2 H(+). Dimethylates a single guanine residue at position 26 of a number of tRNAs using S-adenosyl-L-methionine as donor of the methyl groups. The polypeptide is tRNA (guanine(26)-N(2))-dimethyltransferase (Methanocaldococcus jannaschii (strain ATCC 43067 / DSM 2661 / JAL-1 / JCM 10045 / NBRC 100440) (Methanococcus jannaschii)).